The sequence spans 112 residues: Large ribosomal subunit protein P2-B (112 aa).

Positions 89-112 (APAAADAKKEEEEEDDDMGFGLFD) are disordered.

The protein belongs to the eukaryotic ribosomal protein P1/P2 family. As to quaternary structure, P1 and P2 exist as dimers at the large ribosomal subunit. In terms of processing, phosphorylated.

Its function is as follows. Plays an important role in the elongation step of protein synthesis. The chain is Large ribosomal subunit protein P2-B from Trypanosoma cruzi.